The primary structure comprises 158 residues: Large ribosomal subunit protein bL19 (158 aa).

Positions 1-35 (MTADSKDTSMSEDNTETATAIENSSAMVTDVTSKS) are disordered. Residues 16-35 (ETATAIENSSAMVTDVTSKS) are compositionally biased toward polar residues.

Belongs to the bacterial ribosomal protein bL19 family.

Functionally, this protein is located at the 30S-50S ribosomal subunit interface and may play a role in the structure and function of the aminoacyl-tRNA binding site. The polypeptide is Large ribosomal subunit protein bL19 (Prochlorococcus marinus (strain MIT 9313)).